We begin with the raw amino-acid sequence, 310 residues long: N-acetyl-gamma-glutamyl-phosphate reductase (310 aa).

C117 is an active-site residue.

The protein belongs to the NAGSA dehydrogenase family. Type 2 subfamily.

Its subcellular location is the cytoplasm. The catalysed reaction is N-acetyl-L-glutamate 5-semialdehyde + phosphate + NADP(+) = N-acetyl-L-glutamyl 5-phosphate + NADPH + H(+). It functions in the pathway amino-acid biosynthesis; L-arginine biosynthesis; N(2)-acetyl-L-ornithine from L-glutamate: step 3/4. Its function is as follows. Catalyzes the NADPH-dependent reduction of N-acetyl-5-glutamyl phosphate to yield N-acetyl-L-glutamate 5-semialdehyde. This is N-acetyl-gamma-glutamyl-phosphate reductase from Allorhizobium ampelinum (strain ATCC BAA-846 / DSM 112012 / S4) (Agrobacterium vitis (strain S4)).